The chain runs to 229 residues: Orotidine 5'-phosphate decarboxylase (229 aa).

Residues D10, K32, 59–68 (DLKFHDIPNT), T119, R180, Q189, G209, and R210 contribute to the substrate site. K61 serves as the catalytic Proton donor.

This sequence belongs to the OMP decarboxylase family. Type 1 subfamily. Homodimer.

The catalysed reaction is orotidine 5'-phosphate + H(+) = UMP + CO2. The protein operates within pyrimidine metabolism; UMP biosynthesis via de novo pathway; UMP from orotate: step 2/2. Catalyzes the decarboxylation of orotidine 5'-monophosphate (OMP) to uridine 5'-monophosphate (UMP). This is Orotidine 5'-phosphate decarboxylase from Legionella pneumophila (strain Corby).